The sequence spans 934 residues: Serine/threonine-protein kinase PknD (934 aa).

A Protein kinase domain is found at 4–296; the sequence is YELIRLIGKG…ELRQALQPYL (293 aa). ATP-binding positions include 10–18 and K33; that span reads IGKGGMGEV. The active-site Proton acceptor is the D138.

It belongs to the protein kinase superfamily. Ser/Thr protein kinase family. Interacts with Pkn1. Autophosphorylated on serine and threonine residues. Present in elementary bodies 40 hours post-infection as 2 bands of approximately 55 to 60 and 45 to 50 kDa, which may be due to differential phosphorylation as well as degradation; an enzymatically active full-length protein can also be detected.

The catalysed reaction is L-seryl-[protein] + ATP = O-phospho-L-seryl-[protein] + ADP + H(+). It carries out the reaction L-threonyl-[protein] + ATP = O-phospho-L-threonyl-[protein] + ADP + H(+). In terms of biological role, together with the serine/threonine kinase Pkn1, may play a role in the specific interactions with host proteins during intracellular growth. Autophosphorylates and also phosphorylates Pkn1. The polypeptide is Serine/threonine-protein kinase PknD (Chlamydia trachomatis serovar L2 (strain ATCC VR-902B / DSM 19102 / 434/Bu)).